Here is a 551-residue protein sequence, read N- to C-terminus: L-lactate permease (551 aa).

12 helical membrane-spanning segments follow: residues 13-33 (NIWL…FALI), 37-57 (LKGY…ALLF), 69-89 (VVYG…AAVF), 131-151 (GAAG…GLGF), 159-179 (LCLI…PILV), 194-214 (MVGR…MAIM), 245-265 (IGPE…LTLF), 306-326 (FLFL…ALFA), 366-386 (FDWF…SIVW), 405-425 (LALP…SNYS), 438-458 (TGSA…FLTG), and 530-550 (IFTC…TWMI).

Belongs to the lactate permease family.

The protein resides in the cell inner membrane. It carries out the reaction (S)-lactate(in) + H(+)(in) = (S)-lactate(out) + H(+)(out). It catalyses the reaction (R)-lactate(in) + H(+)(in) = (R)-lactate(out) + H(+)(out). The enzyme catalyses glycolate(in) + H(+)(in) = glycolate(out) + H(+)(out). Uptake of L-lactate across the membrane. Can also transport D-lactate and glycolate. Seems to be driven by a proton motive force. The chain is L-lactate permease (lldP) from Salmonella typhi.